We begin with the raw amino-acid sequence, 349 residues long: GTP 3',8-cyclase (349 aa).

The Radical SAM core domain occupies 24-249; sequence PFGRAITYLR…VDSDYQTGGP (226 aa). Arg33 contacts GTP. [4Fe-4S] cluster contacts are provided by Cys40 and Cys44. Tyr46 is an S-adenosyl-L-methionine binding site. Residue Cys47 participates in [4Fe-4S] cluster binding. Residue Arg82 coordinates GTP. Gly86 serves as a coordination point for S-adenosyl-L-methionine. Residue Thr116 participates in GTP binding. Ser140 contributes to the S-adenosyl-L-methionine binding site. A GTP-binding site is contributed by Lys176. S-adenosyl-L-methionine is bound at residue Met210. [4Fe-4S] cluster is bound by residues Cys273 and Cys276. Residue 278–280 coordinates GTP; that stretch reads RVR. [4Fe-4S] cluster is bound at residue Cys290.

The protein belongs to the radical SAM superfamily. MoaA family. As to quaternary structure, monomer and homodimer. [4Fe-4S] cluster serves as cofactor.

The enzyme catalyses GTP + AH2 + S-adenosyl-L-methionine = (8S)-3',8-cyclo-7,8-dihydroguanosine 5'-triphosphate + 5'-deoxyadenosine + L-methionine + A + H(+). Its pathway is cofactor biosynthesis; molybdopterin biosynthesis. Catalyzes the cyclization of GTP to (8S)-3',8-cyclo-7,8-dihydroguanosine 5'-triphosphate. The polypeptide is GTP 3',8-cyclase (Agrobacterium fabrum (strain C58 / ATCC 33970) (Agrobacterium tumefaciens (strain C58))).